The following is a 280-amino-acid chain: Biotin carboxyl carrier protein of acetyl-CoA carboxylase 1, chloroplastic (280 aa).

A chloroplast-targeting transit peptide spans 1-82 (MASSSFSVTS…SNAAKVDGPS (82 aa)). Over residues 52–75 (PSRSSYPVVKAQSNKVSTGASSNA) the composition is skewed to polar residues. Disordered stretches follow at residues 52–106 (PSRS…ATEE) and 164–215 (QPSY…GTFY). Positions 177–188 (PAAAAPAPSTPA) are enriched in low complexity. Residues 189 to 198 (SLPPPSPPTP) are compositionally biased toward pro residues. One can recognise a Biotinyl-binding domain in the interval 203 to 279 (LPTVKSPMAG…SLDTPLFVVQ (77 aa)). Lys-245 bears the N6-biotinyllysine mark.

Acetyl-CoA carboxylase is a heterohexamer composed of biotin carboxyl carrier protein, biotin carboxylase and 2 subunits each of ACCase subunit alpha and ACCase plastid-coded subunit beta (accD). Present in developing tissues from roots, leaves, flowers, siliques and seeds (at protein level).

Its subcellular location is the plastid. The protein resides in the chloroplast. Its pathway is lipid metabolism; fatty acid biosynthesis. In terms of biological role, this protein is a component of the acetyl coenzyme A carboxylase complex; first, biotin carboxylase catalyzes the carboxylation of the carrier protein and then the transcarboxylase transfers the carboxyl group to form malonyl-CoA. This chain is Biotin carboxyl carrier protein of acetyl-CoA carboxylase 1, chloroplastic (BCCP1), found in Arabidopsis thaliana (Mouse-ear cress).